The following is a 137-amino-acid chain: SPbeta prophage-derived disulfide bond formation protein A (137 aa).

A signal peptide spans 1 to 25; sequence MKKWIVLFLVLIAAAISIFVYVSTG. One can recognise a Thioredoxin domain in the interval 26-136; that stretch reads SEKPFYNDIN…IEKFFDKNGD (111 aa). Cysteines 58 and 61 form a disulfide.

Belongs to the thioredoxin family.

The protein resides in the secreted. Unknown; dispensable for production of the lantibiotic sublancin 168 and for competence for DNA uptake. In Bacillus subtilis (strain 168), this protein is SPbeta prophage-derived disulfide bond formation protein A (bdbA).